Consider the following 34-residue polypeptide: Phalloidin proprotein (34 aa).

Positions 1-10 (MSDINASRLP) are excised as a propeptide. The segment at residues 11 to 17 (AWLATCP) is a cross-link (cyclopeptide (Ala-Pro)). The segment at residues 12 to 16 (WLATC) is a cross-link (2'-cysteinyl-6'-hydroxytryptophan sulfoxide (Trp-Cys)). Positions 18–34 (CVGDDVNPTLSRGESLC) are excised as a propeptide.

Belongs to the MSDIN fungal toxin family. In terms of processing, processed by the macrocyclase-peptidase enzyme POPB to yield a toxic cyclic heptapeptide. POPB first removes 10 residues from the N-terminus. Conformational trapping of the remaining peptide forces the enzyme to release this intermediate rather than proceed to macrocyclization. The enzyme rebinds the remaining peptide in a different conformation and catalyzes macrocyclization of the N-terminal 7 residues.

Toxin that belongs to the bicyclic heptapeptides called phallotoxins. Although structurally related to amatoxins, phallotoxins have a different mode of action, which is the stabilization of F-actin. Phallotoxins are poisonous when administered parenterally, but not orally because of poor absorption. The sequence is that of Phalloidin proprotein from Amanita phalloides (Death cap).